The chain runs to 78 residues: Major outer membrane lipoprotein Lpp (78 aa).

The first 20 residues, M1 to G20, serve as a signal peptide directing secretion. C21 carries the N-palmitoyl cysteine lipid modification. A lipid anchor (S-diacylglycerol cysteine) is attached at C21. 2 repeats span residues T24 to I34 and N38 to V48. Residues V27–S75 are a coiled coil. An N6-murein peptidoglycan lysine modification is found at K78.

This sequence belongs to the Lpp family. In terms of assembly, homotrimer.

It is found in the cell outer membrane. The protein resides in the secreted. Its subcellular location is the cell wall. Its function is as follows. A highly abundant outer membrane lipoprotein that controls the distance between the inner and outer membranes. The only protein known to be covalently linked to the peptidoglycan network (PGN). Also non-covalently binds the PGN. The link between the cell outer membrane and PGN contributes to maintenance of the structural and functional integrity of the cell envelope, and maintains the correct distance between the PGN and the outer membrane. This Photorhabdus laumondii subsp. laumondii (strain DSM 15139 / CIP 105565 / TT01) (Photorhabdus luminescens subsp. laumondii) protein is Major outer membrane lipoprotein Lpp.